The sequence spans 86 residues: MAQKKGGGSTRNGRDSESKRLGVKVFGGQQIPAGSIIVRQRGTRFHPGTNVGIGKDHTLFALIDGKVQFGFKGALNKQVVSVVAAE.

Positions 1 to 10 are enriched in gly residues; sequence MAQKKGGGST. The disordered stretch occupies residues 1–21; the sequence is MAQKKGGGSTRNGRDSESKRL.

Belongs to the bacterial ribosomal protein bL27 family.

The sequence is that of Large ribosomal subunit protein bL27 from Bordetella petrii (strain ATCC BAA-461 / DSM 12804 / CCUG 43448).